We begin with the raw amino-acid sequence, 1073 residues long: Envelopment polyprotein (1073 aa).

The N-terminal stretch at 1–19 (MMKVIWFSSLICFVIQCSG) is a signal peptide. At 20–453 (DSGPIICAGP…NPQCYPAKKW (434 aa)) the chain is on the lumenal side. A disulfide bridge links C26 with C49. Residues N33 and N63 are each glycosylated (N-linked (GlcNAc...) asparagine; by host). 10 disulfide bridges follow: C143–C156, C180–C327, C206–C216, C258–C305, C266–C303, C274–C280, C287–C292, C349–C352, C356–C424, and C376–C381. The chain crosses the membrane as a helical span at residues 454–474 (LFIIIVILLGYAGLMLLTNVL). Positions 475–521 (KAIGIWGSWVIAPVKLMFAIIKKLMRTVSCLMRKLMDRGRQVIHEEI) are golgi retention signal. The Cytoplasmic segment spans residues 475 to 535 (KAIGIWGSWV…EGNQDDVRIE (61 aa)). The tract at residues 536–562 (MARPRRVRHWMYSPVILTILAIGLAES) is internal signal sequence for glycoprotein C. Disulfide bonds link C563-C604, C576-C586, C629-C725, C644-C841, C650-C698, C656-C705, C660-C687, C691-C696, C778-C793, and C809-C823. Residues 563–1036 (CDEMVHADSK…ALFGNGLSRW (474 aa)) are Lumenal-facing. Residues 650 to 656 (CRWAGDC) form a fusion loop region. Positions 691-705 (CGGAACGCFNAAPSC) are fusion loop. N-linked (GlcNAc...) asparagine; by host glycans are attached at residues N853 and N914. Intrachain disulfides connect C908/C978, C918/C921, and C943/C974. N-linked (GlcNAc...) asparagine; by host glycosylation occurs at N936. Residues 1037-1057 (ILGVIGVLLGGLALFFMIMSL) form a helical membrane-spanning segment. The Cytoplasmic segment spans residues 1058–1073 (FKLGTKQVFRSRTKLA).

Belongs to the phlebovirus envelope glycoprotein family. In terms of assembly, homodimer. Heterodimer with glycoprotein C. Homotrimer (postfusion). Heterodimer with glycoprotein N. Post-translationally, specific enzymatic cleavages in vivo yield mature proteins including glycoprotein C and glycoprotein N. The cytoplasmic tail is Palmitoylated. In terms of processing, glycosylated. Post-translationally, palmitoylated.

The protein resides in the virion membrane. Its subcellular location is the host Golgi apparatus membrane. It localises to the host endoplasmic reticulum membrane. Structural component of the virion that interacts with glycoprotein C. It shields the hydrophobic fusion loops of the glycoprotein C, preventing premature fusion. The glycoprotein protrusions are arranged on an icosahedral lattice, with T=12 triangulation. They are able to attach the virion to the host cell receptor CD209/DC-SIGN and to promote fusion of membranes with the late endosome after clathrin-mediated endocytosis of the virion. Plays a role in the packaging of ribonucleoproteins during virus assembly. Its function is as follows. Structural component of the virion that interacts with glycoprotein N. Acts as a class II fusion protein that is activated upon acidification and subsequent repositioning of the glycoprotein N. The glycoprotein protrusions are arranged on an icosahedral lattice, with T=12 triangulation. They are able to attach the virion to the host cell receptor CD209/DC-SIGN and to promote fusion of membranes with the late endosome after clathrin-mediated endocytosis of the virion. This chain is Envelopment polyprotein, found in Dabie bandavirus (Severe fever with thrombocytopenia virus).